The following is a 560-amino-acid chain: Membrane protein insertase YidC (560 aa).

A helical membrane pass occupies residues 7–27 (ILIVALAIVSYVMVLKWNQDY). The segment at 43-72 (APAIPDTPLGNNASASADVPSANGETSAPL) is disordered. 4 helical membrane passes run 367–387 (IVGNWGWSIIFLTMLIKGIFF), 437–457 (LGGCLPILVQMPVFLSLYWVL), 468–488 (FMLWITDLSIKDPFFILPIIM), and 515–535 (PIIFTFFFLWFPAGLVLYWVV).

This sequence belongs to the OXA1/ALB3/YidC family. Type 1 subfamily. Interacts with the Sec translocase complex via SecD. Specifically interacts with transmembrane segments of nascent integral membrane proteins during membrane integration.

It is found in the cell inner membrane. Its function is as follows. Required for the insertion and/or proper folding and/or complex formation of integral membrane proteins into the membrane. Involved in integration of membrane proteins that insert both dependently and independently of the Sec translocase complex, as well as at least some lipoproteins. Aids folding of multispanning membrane proteins. In Pseudomonas fluorescens (strain SBW25), this protein is Membrane protein insertase YidC.